A 306-amino-acid chain; its full sequence is Pseudouridine-5'-phosphate glycosidase (306 aa).

Glutamate 28 serves as the catalytic Proton donor. Substrate-binding residues include lysine 89 and valine 109. Aspartate 139 serves as a coordination point for Mn(2+). 141 to 143 (SAD) contributes to the substrate binding site. Residue lysine 160 is the Nucleophile of the active site.

The protein belongs to the pseudouridine-5'-phosphate glycosidase family. In terms of assembly, homotrimer. It depends on Mn(2+) as a cofactor.

It catalyses the reaction D-ribose 5-phosphate + uracil = psi-UMP + H2O. Its function is as follows. Catalyzes the reversible cleavage of pseudouridine 5'-phosphate (PsiMP) to ribose 5-phosphate and uracil. Functions biologically in the cleavage direction, as part of a pseudouridine degradation pathway. The polypeptide is Pseudouridine-5'-phosphate glycosidase (Gemmatimonas aurantiaca (strain DSM 14586 / JCM 11422 / NBRC 100505 / T-27)).